Here is a 706-residue protein sequence, read N- to C-terminus: Protein kinase C theta type (706 aa).

The C2 domain maps to Met1–Leu107. Tyr90 carries the post-translational modification Phosphotyrosine; by LCK. Residues Cys159 to Cys209 form a Phorbol-ester/DAG-type 1 zinc finger. Thr219 carries the phosphothreonine; by autocatalysis modification. The Phorbol-ester/DAG-type 2 zinc finger occupies Pro231–Cys281. The residue at position 348 (Ser348) is a Phosphoserine. The region spanning Phe380–Phe634 is the Protein kinase domain. ATP contacts are provided by residues Leu386–Val394 and Lys409. The active-site Proton acceptor is Asp504. A Phosphothreonine; by PDPK1 modification is found at Thr538. One can recognise an AGC-kinase C-terminal domain in the interval Arg635–Ser706. 3 positions are modified to phosphoserine: Ser676, Ser685, and Ser695.

The protein belongs to the protein kinase superfamily. AGC Ser/Thr protein kinase family. PKC subfamily. Part of a lipid raft complex composed at least of BCL10, CARD11, MALT1 and IKBKB. Interacts with GLRX3 (via N-terminus). Interacts with ECT2. Interacts with CCDC88A/GIV; the interaction leads to phosphorylation of CCDC88A and inhibition of its guanine nucleotide exchange factor activity. Interacts with PRKCH upstream open reading frame 2; the interaction leads to inhibition of kinase activity. Interacts with CD28. It depends on Mg(2+) as a cofactor. Post-translationally, autophosphorylation at Thr-219 is required for targeting to the TCR and cellular function of PRKCQ upon antigen receptor ligation. Following TCR stimulation, phosphorylated at Tyr-90 and Ser-685. In terms of tissue distribution, expressed in skeletal muscle, T-cells, megakaryoblastic cells and platelets.

The protein localises to the cytoplasm. The protein resides in the cell membrane. The catalysed reaction is L-seryl-[protein] + ATP = O-phospho-L-seryl-[protein] + ADP + H(+). The enzyme catalyses L-threonyl-[protein] + ATP = O-phospho-L-threonyl-[protein] + ADP + H(+). Its activity is regulated as follows. Novel PKCs (PRKCD, PRKCE, PRKCH and PRKCQ) are calcium-insensitive, but activated by diacylglycerol (DAG) and phosphatidylserine. Three specific sites; Thr-538 (activation loop of the kinase domain), Ser-676 (turn motif) and Ser-695 (hydrophobic region), need to be phosphorylated for its full activation. Inhibited by PRKCH upstream open reading frame 2. Its function is as follows. Calcium-independent, phospholipid- and diacylglycerol (DAG)-dependent serine/threonine-protein kinase that mediates non-redundant functions in T-cell receptor (TCR) signaling, including T-cells activation, proliferation, differentiation and survival, by mediating activation of multiple transcription factors such as NF-kappa-B, JUN, NFATC1 and NFATC2. In TCR-CD3/CD28-co-stimulated T-cells, is required for the activation of NF-kappa-B and JUN, which in turn are essential for IL2 production, and participates in the calcium-dependent NFATC1 and NFATC2 transactivation. Mediates the activation of the canonical NF-kappa-B pathway (NFKB1) by direct phosphorylation of CARD11 on several serine residues, inducing CARD11 association with lipid rafts and recruitment of the BCL10-MALT1 complex, which then activates IKK complex, resulting in nuclear translocation and activation of NFKB1. May also play an indirect role in activation of the non-canonical NF-kappa-B (NFKB2) pathway. In the signaling pathway leading to JUN activation, acts by phosphorylating the mediator STK39/SPAK and may not act through MAP kinases signaling. Plays a critical role in TCR/CD28-induced NFATC1 and NFATC2 transactivation by participating in the regulation of reduced inositol 1,4,5-trisphosphate generation and intracellular calcium mobilization. After costimulation of T-cells through CD28 can phosphorylate CBLB and is required for the ubiquitination and subsequent degradation of CBLB, which is a prerequisite for the activation of TCR. During T-cells differentiation, plays an important role in the development of T-helper 2 (Th2) cells following immune and inflammatory responses, and, in the development of inflammatory autoimmune diseases, is necessary for the activation of IL17-producing Th17 cells. May play a minor role in Th1 response. Upon TCR stimulation, mediates T-cell protective survival signal by phosphorylating BAD, thus protecting T-cells from BAD-induced apoptosis, and by up-regulating BCL-X(L)/BCL2L1 levels through NF-kappa-B and JUN pathways. In platelets, regulates signal transduction downstream of the ITGA2B, CD36/GP4, F2R/PAR1 and F2RL3/PAR4 receptors, playing a positive role in 'outside-in' signaling and granule secretion signal transduction. May relay signals from the activated ITGA2B receptor by regulating the uncoupling of WASP and WIPF1, thereby permitting the regulation of actin filament nucleation and branching activity of the Arp2/3 complex. May mediate inhibitory effects of free fatty acids on insulin signaling by phosphorylating IRS1, which in turn blocks IRS1 tyrosine phosphorylation and downstream activation of the PI3K/AKT pathway. Phosphorylates MSN (moesin) in the presence of phosphatidylglycerol or phosphatidylinositol. Phosphorylates PDPK1 at 'Ser-504' and 'Ser-532' and negatively regulates its ability to phosphorylate PKB/AKT1. Phosphorylates CCDC88A/GIV and inhibits its guanine nucleotide exchange factor activity. Phosphorylates and activates LRRK1, which phosphorylates RAB proteins involved in intracellular trafficking. The protein is Protein kinase C theta type (PRKCQ) of Homo sapiens (Human).